A 135-amino-acid chain; its full sequence is ATP synthase epsilon chain (135 aa).

The protein belongs to the ATPase epsilon chain family. F-type ATPases have 2 components, CF(1) - the catalytic core - and CF(0) - the membrane proton channel. CF(1) has five subunits: alpha(3), beta(3), gamma(1), delta(1), epsilon(1). CF(0) has three main subunits: a, b and c.

The protein localises to the cell inner membrane. Produces ATP from ADP in the presence of a proton gradient across the membrane. The chain is ATP synthase epsilon chain from Rhizobium rhizogenes (strain K84 / ATCC BAA-868) (Agrobacterium radiobacter).